We begin with the raw amino-acid sequence, 218 residues long: uncharacterized protein (218 aa).

The next 5 membrane-spanning stretches (helical) occupy residues 28–48 (ILLF…LSGL), 66–86 (FDIG…WKPL), 92–112 (LGTL…TKIL), 122–142 (MIFC…YLTC), and 173–193 (ISVC…TVLF).

The protein localises to the cell membrane. This is an uncharacterized protein from Haemophilus influenzae (strain ATCC 51907 / DSM 11121 / KW20 / Rd).